Reading from the N-terminus, the 181-residue chain is Mannose-specific lectin (181 aa).

The N-terminal stretch at 1–30 is a signal peptide; it reads MGRTTSSPKAMMRIATVAAILTILASTCMA. The region spanning 31 to 140 is the Bulb-type lectin domain; that stretch reads RNVLTNGEGL…DIWSTGTYRR (110 aa). Alpha-D-mannopyranose contacts are provided by glutamine 56, aspartate 58, asparagine 60, tyrosine 64, tryptophan 71, alanine 72, asparagine 74, glutamine 88, aspartate 90, asparagine 92, tyrosine 96, valine 103, tryptophan 104, asparagine 107, asparagine 114, glutamine 120, aspartate 122, asparagine 124, tyrosine 128, and tryptophan 133. Cysteine 59 and cysteine 83 are disulfide-bonded.

Homodimer.

The protein localises to the secreted. Mannose-specific lectin. Shows agglutinating activity towards rabbit erythrocytes. However, it does not show agglutinating activity towards human erythrocytes. Has insecticidal activity against the cotton leafworm S.littoralis and the peach potato aphid M.persicae. Also displays antiviral activity and therefore may contribute to defense against infections. The polypeptide is Mannose-specific lectin (Allium sativum (Garlic)).